A 345-amino-acid polypeptide reads, in one-letter code: Ferrochelatase (345 aa).

The Fe cation site is built by histidine 215 and glutamate 296.

The protein belongs to the ferrochelatase family.

The protein resides in the cytoplasm. The catalysed reaction is heme b + 2 H(+) = protoporphyrin IX + Fe(2+). Its pathway is porphyrin-containing compound metabolism; protoheme biosynthesis; protoheme from protoporphyrin-IX: step 1/1. Functionally, catalyzes the ferrous insertion into protoporphyrin IX. In Rhodopseudomonas palustris (strain HaA2), this protein is Ferrochelatase.